Consider the following 119-residue polypeptide: MSGKVTTHVLDTSCGKPAAGVVVELWRIVEGGESELLTKAVTNQDGRLDKPLLTENKMARGVYELRFQVGDYFLRNGFVNQAYPFLHVIPVRFGLEDVNEHYHVPLLVAPGGYSTYRGS.

Residues His-8, Arg-47, and Tyr-116 each coordinate substrate.

It belongs to the transthyretin family. 5-hydroxyisourate hydrolase subfamily. Homotetramer.

It catalyses the reaction 5-hydroxyisourate + H2O = 5-hydroxy-2-oxo-4-ureido-2,5-dihydro-1H-imidazole-5-carboxylate + H(+). The protein operates within purine metabolism; urate degradation; (S)-allantoin from urate: step 2/3. Functionally, catalyzes the hydrolysis of 5-hydroxyisourate (HIU) to 2-oxo-4-hydroxy-4-carboxy-5-ureidoimidazoline (OHCU). This chain is 5-hydroxyisourate hydrolase, found in Halalkalibacterium halodurans (strain ATCC BAA-125 / DSM 18197 / FERM 7344 / JCM 9153 / C-125) (Bacillus halodurans).